We begin with the raw amino-acid sequence, 226 residues long: Prolactin (226 aa).

A signal peptide spans 1-29 (MNSQGSAQKAGTLLLLLISNLLFCQNVQP). An intrachain disulfide couples C33 to C38. Residues S53 and S117 each carry the phosphoserine modification. 2 cysteine pairs are disulfide-bonded: C85/C201 and C218/C226.

This sequence belongs to the somatotropin/prolactin family. Interacts with PRLR.

The protein resides in the secreted. Functionally, prolactin acts primarily on the mammary gland by promoting lactation. This is Prolactin (Prl) from Mus musculus (Mouse).